A 208-amino-acid chain; its full sequence is Putative thymidylate kinase (208 aa).

Residues 12-19 (GIDGTGTS) form a defective ATP-binding region.

The protein belongs to the thymidylate kinase family.

It catalyses the reaction dTMP + ATP = dTDP + ADP. In Treponema pallidum (strain Nichols), this protein is Putative thymidylate kinase (tmk).